We begin with the raw amino-acid sequence, 181 residues long: 6,7-dimethyl-8-ribityllumazine synthase (181 aa).

Residues Y30, 61–63 (ALE), and 87–89 (CII) each bind 5-amino-6-(D-ribitylamino)uracil. 92 to 93 (ET) is a binding site for (2S)-2-hydroxy-3-oxobutyl phosphate. The active-site Proton donor is H95. N120 lines the 5-amino-6-(D-ribitylamino)uracil pocket. R134 is a (2S)-2-hydroxy-3-oxobutyl phosphate binding site.

Belongs to the DMRL synthase family.

It catalyses the reaction (2S)-2-hydroxy-3-oxobutyl phosphate + 5-amino-6-(D-ribitylamino)uracil = 6,7-dimethyl-8-(1-D-ribityl)lumazine + phosphate + 2 H2O + H(+). It functions in the pathway cofactor biosynthesis; riboflavin biosynthesis; riboflavin from 2-hydroxy-3-oxobutyl phosphate and 5-amino-6-(D-ribitylamino)uracil: step 1/2. Functionally, catalyzes the formation of 6,7-dimethyl-8-ribityllumazine by condensation of 5-amino-6-(D-ribitylamino)uracil with 3,4-dihydroxy-2-butanone 4-phosphate. This is the penultimate step in the biosynthesis of riboflavin. This Beijerinckia indica subsp. indica (strain ATCC 9039 / DSM 1715 / NCIMB 8712) protein is 6,7-dimethyl-8-ribityllumazine synthase.